The chain runs to 1209 residues: Sterol 3-beta-glucosyltransferase (1209 aa).

The 51-residue stretch at 167 to 217 folds into the GRAM 1 domain; the sequence is ERLIKKFLPNDDEKYIEEYPCWLLRDIMIQGHAYLTNKHLFFFAFIPNFES. Residues 218-315 enclose the PH domain; the sequence is DFNVTGSLRL…WVSSIKKQMF (98 aa). The GRAM 2 domain maps to 568–634; the sequence is VRFRQHFSFD…EDVENCYKET (67 aa). Ser745, Arg746, Asp748, Asn1019, Val1048, His1050, His1063, Ser1066, Gly1067, Thr1068, Asp1087, and Gln1088 together coordinate UDP-alpha-D-glucose. Positions 1186-1209 are disordered; that stretch reads AKGNEKEEYSSEGSGSNDGSWLLI. Residues 1196 to 1209 show a composition bias toward low complexity; the sequence is SEGSGSNDGSWLLI.

The protein belongs to the glycosyltransferase 28 family.

It localises to the cytoplasm. The protein localises to the membrane. It catalyses the reaction a sterol + UDP-alpha-D-glucose = a sterol 3-beta-D-glucoside + UDP + H(+). The enzyme catalyses ergosterol + UDP-alpha-D-glucose = ergosteryl 3-beta-D-glucoside + UDP + H(+). Sterol glycosyltransferase responsible for the glycosylation of ergosterol to form ergosterol-glucoside. The chain is Sterol 3-beta-glucosyltransferase from Kluyveromyces lactis (strain ATCC 8585 / CBS 2359 / DSM 70799 / NBRC 1267 / NRRL Y-1140 / WM37) (Yeast).